The following is a 333-amino-acid chain: GDP-fucose transporter 1 (333 aa).

The next 8 helical transmembrane spans lie at 13 to 33, 45 to 65, 95 to 115, 139 to 159, 169 to 189, 211 to 231, 239 to 259, and 293 to 313; these read SIKI…MVFL, APMF…FILG, LVFV…GVAF, TSMP…VGVN, MAGI…AIYI, AIFL…IAAS, YWFL…VSML, and TATW…YVLV.

Belongs to the TPT transporter family. SLC35C subfamily.

Its subcellular location is the golgi apparatus membrane. It catalyses the reaction GMP(out) + GDP-beta-L-fucose(in) = GMP(in) + GDP-beta-L-fucose(out). In terms of biological role, antiporter specific for GDP-l-fucose and depending on the concomitant reverse transport of GMP. Involved in GDP-fucose import from the cytoplasm into the Golgi lumen. In Monosiga brevicollis (Choanoflagellate), this protein is GDP-fucose transporter 1 (slc35c1).